The chain runs to 323 residues: Ankyrin repeat and SOCS box protein 11 (323 aa).

ANK repeat units follow at residues 64–93, 97–126, 130–159, 162–191, 195–224, and 227–256; these read ADRS…NVNL, NRVS…HVNG, HGAT…KAQF, HLAS…NIDH, QLGT…SVDH, and WLDT…NLKR. The region spanning 274–323 is the SOCS box domain; it reads VEQALLLCEGPPALSQLCRLCVRKCLGRACHQAIHKLHLPEPLERFLLYQ.

Belongs to the ankyrin SOCS box (ASB) family. Substrate-recognition component of the ECS(ASB11) complex, composed of ASB11, CUL5, ELOB, ELOC and RNF7/RBX2.

Its subcellular location is the endoplasmic reticulum. It functions in the pathway protein modification; protein ubiquitination. Substrate-recognition component of a cullin-5-RING E3 ubiquitin-protein ligase complex (ECS complex, also named CRL5 complex), which mediates the ubiquitination and subsequent proteasomal degradation of target proteins, such as BIK, DIRAS2 and RPN1. The ECS(ASB11) complex acts as a regulator of the endoplasmic reticulum unfolded protein response by mediating ubiquitination and degradation of BIK. This Pongo abelii (Sumatran orangutan) protein is Ankyrin repeat and SOCS box protein 11 (ASB11).